We begin with the raw amino-acid sequence, 155 residues long: Small ribosomal subunit protein bS6 (155 aa).

A compositionally biased stretch (basic and acidic residues) spans 115–137 (EADAAKAEADAARVEAEAKKAET). The interval 115–155 (EADAAKAEADAARVEAEAKKAETDETDETVDAETPENEEEN) is disordered. A compositionally biased stretch (acidic residues) spans 138–155 (DETDETVDAETPENEEEN).

This sequence belongs to the bacterial ribosomal protein bS6 family.

Binds together with bS18 to 16S ribosomal RNA. This chain is Small ribosomal subunit protein bS6, found in Desulforapulum autotrophicum (strain ATCC 43914 / DSM 3382 / VKM B-1955 / HRM2) (Desulfobacterium autotrophicum).